The chain runs to 296 residues: GTPase Era (296 aa).

The region spanning 7 to 174 is the Era-type G domain; that stretch reads HCGFVAIVGR…LDQVRPHLPE (168 aa). The segment at 15 to 22 is G1; sequence GRPNVGKS. A GTP-binding site is contributed by 15–22; it reads GRPNVGKS. A G2 region spans residues 41–45; that stretch reads QTTRH. The G3 stretch occupies residues 62–65; that stretch reads DTPG. GTP contacts are provided by residues 62–66 and 123–126; these read DTPGF and NKLD. A G4 region spans residues 123–126; the sequence is NKLD. Residues 153 to 155 form a G5 region; it reads VSA. A KH type-2 domain is found at 205–281; the sequence is LGEELPYEMN…FLQVWVKVKS (77 aa).

It belongs to the TRAFAC class TrmE-Era-EngA-EngB-Septin-like GTPase superfamily. Era GTPase family. As to quaternary structure, monomer.

The protein localises to the cytoplasm. It is found in the cell inner membrane. Its function is as follows. An essential GTPase that binds both GDP and GTP, with rapid nucleotide exchange. Plays a role in 16S rRNA processing and 30S ribosomal subunit biogenesis and possibly also in cell cycle regulation and energy metabolism. The polypeptide is GTPase Era (Chromobacterium violaceum (strain ATCC 12472 / DSM 30191 / JCM 1249 / CCUG 213 / NBRC 12614 / NCIMB 9131 / NCTC 9757 / MK)).